We begin with the raw amino-acid sequence, 605 residues long: Isocitrate dehydrogenase kinase/phosphatase (605 aa).

ATP-binding positions include 353–359 and K374; that span reads APGFKGT. Residue D413 is part of the active site.

This sequence belongs to the AceK family.

It localises to the cytoplasm. It catalyses the reaction L-seryl-[isocitrate dehydrogenase] + ATP = O-phospho-L-seryl-[isocitrate dehydrogenase] + ADP + H(+). Functionally, bifunctional enzyme which can phosphorylate or dephosphorylate isocitrate dehydrogenase (IDH) on a specific serine residue. This is a regulatory mechanism which enables bacteria to bypass the Krebs cycle via the glyoxylate shunt in response to the source of carbon. When bacteria are grown on glucose, IDH is fully active and unphosphorylated, but when grown on acetate or ethanol, the activity of IDH declines drastically concomitant with its phosphorylation. The polypeptide is Isocitrate dehydrogenase kinase/phosphatase (Rhodopseudomonas palustris (strain HaA2)).